The following is a 129-amino-acid chain: Antimicrobial peptide NK-lysin (129 aa).

The signal sequence occupies residues 1 to 6; the sequence is PGLAFS. A propeptide spanning residues 7 to 46 is cleaved from the precursor; sequence GLTPEHSALARAHPCDGEQFCQNLAPEDPQGDQLLQREEL. In terms of domain architecture, Saposin B-type spans 46–126; it reads LGLICESCRK…VDIKICKEKT (81 aa). Disulfide bonds link cysteine 50-cysteine 122, cysteine 53-cysteine 116, and cysteine 81-cysteine 91. A propeptide spanning residues 125 to 129 is cleaved from the precursor; sequence KTGLI.

As to expression, cytotoxic T and NK cells.

It is found in the secreted. Its function is as follows. May be an effector molecule of cytotoxic activity. High activity against E.coli and B.megaterium, moderate against A.calcoaceticus and S.pyogenes. No activity against P.aeruginosa, S.aureus and Salmonella. Has some antifungal activity against C.albicans. This Sus scrofa (Pig) protein is Antimicrobial peptide NK-lysin (NKL).